We begin with the raw amino-acid sequence, 638 residues long: Phosphomethylpyrimidine synthase (638 aa).

Substrate is bound by residues asparagine 233, methionine 262, tyrosine 291, histidine 327, 347-349 (SRG), 388-391 (DGLR), and glutamate 427. Position 431 (histidine 431) interacts with Zn(2+). Position 454 (tyrosine 454) interacts with substrate. Histidine 495 lines the Zn(2+) pocket. Positions 575, 578, and 583 each coordinate [4Fe-4S] cluster.

The protein belongs to the ThiC family. In terms of assembly, homodimer. It depends on [4Fe-4S] cluster as a cofactor.

It carries out the reaction 5-amino-1-(5-phospho-beta-D-ribosyl)imidazole + S-adenosyl-L-methionine = 4-amino-2-methyl-5-(phosphooxymethyl)pyrimidine + CO + 5'-deoxyadenosine + formate + L-methionine + 3 H(+). The protein operates within cofactor biosynthesis; thiamine diphosphate biosynthesis. Catalyzes the synthesis of the hydroxymethylpyrimidine phosphate (HMP-P) moiety of thiamine from aminoimidazole ribotide (AIR) in a radical S-adenosyl-L-methionine (SAM)-dependent reaction. In Saccharophagus degradans (strain 2-40 / ATCC 43961 / DSM 17024), this protein is Phosphomethylpyrimidine synthase.